A 72-amino-acid chain; its full sequence is DNA-directed RNA polymerase subunit epsilon (72 aa).

This sequence belongs to the RNA polymerase subunit epsilon family. As to quaternary structure, RNAP is composed of a core of 2 alpha, a beta and a beta' subunit. The core is associated with a delta subunit, and at least one of epsilon or omega. When a sigma factor is associated with the core the holoenzyme is formed, which can initiate transcription.

The catalysed reaction is RNA(n) + a ribonucleoside 5'-triphosphate = RNA(n+1) + diphosphate. Functionally, a non-essential component of RNA polymerase (RNAP). This is DNA-directed RNA polymerase subunit epsilon from Staphylococcus haemolyticus (strain JCSC1435).